Here is a 548-residue protein sequence, read N- to C-terminus: Palmitoyltransferase pfa3 (548 aa).

At M1–C32 the chain is on the cytoplasmic side. The helical transmembrane segment at A33–V53 threads the bilayer. Residues E54 to P70 lie on the Extracellular side of the membrane. A helical membrane pass occupies residues T71–F91. At T92–K173 the chain is on the cytoplasmic side. One can recognise a DHHC domain in the interval R130–I180. The helical transmembrane segment at A174 to A194 threads the bilayer. At T195–N215 the chain is on the extracellular side. Residues V216–W236 form a helical membrane-spanning segment. Residues H237–D548 are Cytoplasmic-facing. Disordered regions lie at residues R313–T339 and N463–D548. Positions D508–T535 are enriched in polar residues. A compositionally biased stretch (basic and acidic residues) spans N536–D548.

The protein belongs to the DHHC palmitoyltransferase family. PFA3 subfamily. Autopalmitoylated.

The protein localises to the vacuole membrane. The enzyme catalyses L-cysteinyl-[protein] + hexadecanoyl-CoA = S-hexadecanoyl-L-cysteinyl-[protein] + CoA. Palmitoyltransferase specific for VAC8. Palmitoylates VAC8 at one or more of its N-terminal cysteine residues, which is required for its proper membrane localization. In Aspergillus fumigatus (strain ATCC MYA-4609 / CBS 101355 / FGSC A1100 / Af293) (Neosartorya fumigata), this protein is Palmitoyltransferase pfa3 (pfa3).